Here is a 163-residue protein sequence, read N- to C-terminus: Probable calcium-binding protein CML26 (163 aa).

Position 2 is an N-acetylalanine (A2). EF-hand domains lie at 16–51 (STDMELKKVFDKFDANGDGKISVSELGNVFKSMGTS), 52–82 (YTEEELNRVLDEIDIDCDGFINQEEFATICR), 85–120 (SSAVEIREAFDLYDQNKNGLISSSEIHKVLNRLGMT), and 121–156 (CSVEDCVRMIGHVDTDGDGNVNFEEFQKMMSSPELV). Residues D29, N31, D33, K35, E40, D65, D67, D69, E76, D98, N100, N102, E109, D134, D136, D138, N140, and E145 each coordinate Ca(2+).

In terms of biological role, potential calcium sensor. The polypeptide is Probable calcium-binding protein CML26 (CML26) (Arabidopsis thaliana (Mouse-ear cress)).